The sequence spans 175 residues: Cell division protein SepF (175 aa).

A compositionally biased stretch (acidic residues) spans 20 to 29 (RYEDYDDYDD). The tract at residues 20 to 88 (RYEDYDDYDD…ERPTPPLRVT (69 aa)) is disordered. Composition is skewed to basic and acidic residues over residues 30–47 (AEPH…DLGS) and 54–73 (RRMD…RRVS).

The protein belongs to the SepF family. In terms of assembly, homodimer. Interacts with FtsZ.

It localises to the cytoplasm. Functionally, cell division protein that is part of the divisome complex and is recruited early to the Z-ring. Probably stimulates Z-ring formation, perhaps through the cross-linking of FtsZ protofilaments. Its function overlaps with FtsA. The chain is Cell division protein SepF from Acidothermus cellulolyticus (strain ATCC 43068 / DSM 8971 / 11B).